A 159-amino-acid chain; its full sequence is Phosphopantetheine adenylyltransferase (159 aa).

S9 serves as a coordination point for substrate. Residues 9 to 10 (SF) and H17 contribute to the ATP site. The substrate site is built by K41, L73, and K87. ATP-binding positions include 88–90 (GLR), E98, and 122–128 (YSFLSSS).

This sequence belongs to the bacterial CoaD family. As to quaternary structure, homohexamer. Mg(2+) serves as cofactor.

The protein localises to the cytoplasm. It carries out the reaction (R)-4'-phosphopantetheine + ATP + H(+) = 3'-dephospho-CoA + diphosphate. It functions in the pathway cofactor biosynthesis; coenzyme A biosynthesis; CoA from (R)-pantothenate: step 4/5. Reversibly transfers an adenylyl group from ATP to 4'-phosphopantetheine, yielding dephospho-CoA (dPCoA) and pyrophosphate. This Streptomyces coelicolor (strain ATCC BAA-471 / A3(2) / M145) protein is Phosphopantetheine adenylyltransferase.